The chain runs to 65 residues: Large ribosomal subunit protein bL35 (65 aa).

Composition is skewed to basic residues over residues 1-15 and 26-44; these read MPKMKTKKSASKRFT and QAFKRHILTKKTTKNKRQL. Residues 1–65 form a disordered region; it reads MPKMKTKKSA…KSVRAMMPYA (65 aa).

It belongs to the bacterial ribosomal protein bL35 family.

This Ralstonia nicotianae (strain ATCC BAA-1114 / GMI1000) (Ralstonia solanacearum) protein is Large ribosomal subunit protein bL35.